The chain runs to 62 residues: Photosystem II reaction center protein Z (62 aa).

2 helical membrane passes run Ala-8–Ala-28 and Trp-41–Val-61.

This sequence belongs to the PsbZ family. As to quaternary structure, PSII is composed of 1 copy each of membrane proteins PsbA, PsbB, PsbC, PsbD, PsbE, PsbF, PsbH, PsbI, PsbJ, PsbK, PsbL, PsbM, PsbT, PsbX, PsbY, PsbZ, Psb30/Ycf12, peripheral proteins PsbO, CyanoQ (PsbQ), PsbU, PsbV and a large number of cofactors. It forms dimeric complexes.

Its subcellular location is the cellular thylakoid membrane. May control the interaction of photosystem II (PSII) cores with the light-harvesting antenna, regulates electron flow through the 2 photosystem reaction centers. PSII is a light-driven water plastoquinone oxidoreductase, using light energy to abstract electrons from H(2)O, generating a proton gradient subsequently used for ATP formation. The polypeptide is Photosystem II reaction center protein Z (Trichormus variabilis (strain ATCC 29413 / PCC 7937) (Anabaena variabilis)).